A 243-amino-acid polypeptide reads, in one-letter code: Small ribosomal subunit protein uS2 (243 aa).

This sequence belongs to the universal ribosomal protein uS2 family.

The sequence is that of Small ribosomal subunit protein uS2 from Aliivibrio salmonicida (strain LFI1238) (Vibrio salmonicida (strain LFI1238)).